We begin with the raw amino-acid sequence, 102 residues long: Small ribosomal subunit protein uS10 (102 aa).

It belongs to the universal ribosomal protein uS10 family. Part of the 30S ribosomal subunit.

Functionally, involved in the binding of tRNA to the ribosomes. This is Small ribosomal subunit protein uS10 from Clostridium acetobutylicum (strain ATCC 824 / DSM 792 / JCM 1419 / IAM 19013 / LMG 5710 / NBRC 13948 / NRRL B-527 / VKM B-1787 / 2291 / W).